The primary structure comprises 223 residues: Triosephosphate isomerase (223 aa).

10–12 (NFK) is a binding site for substrate. Histidine 94 (electrophile) is an active-site residue. Glutamate 142 (proton acceptor) is an active-site residue. Residues isoleucine 147, glycine 182, and 203–204 (AS) contribute to the substrate site.

It belongs to the triosephosphate isomerase family. Homotetramer; dimer of dimers.

The protein localises to the cytoplasm. The catalysed reaction is D-glyceraldehyde 3-phosphate = dihydroxyacetone phosphate. Its pathway is carbohydrate biosynthesis; gluconeogenesis. It participates in carbohydrate degradation; glycolysis; D-glyceraldehyde 3-phosphate from glycerone phosphate: step 1/1. In terms of biological role, involved in the gluconeogenesis. Catalyzes stereospecifically the conversion of dihydroxyacetone phosphate (DHAP) to D-glyceraldehyde-3-phosphate (G3P). The polypeptide is Triosephosphate isomerase (Archaeoglobus fulgidus (strain ATCC 49558 / DSM 4304 / JCM 9628 / NBRC 100126 / VC-16)).